A 70-amino-acid chain; its full sequence is MSDSNTGTVKWFNEDKGFGFLTQDNGGADVFVHFRAIASEGFKTLDEGQKVTFEVEQGPKGLQASNVIAL.

A CSD domain is found at 7–67 (GTVKWFNEDK…GPKGLQASNV (61 aa)).

It localises to the cytoplasm. The chain is Cold shock-like protein CspA (cspA) from Shewanella violacea (strain JCM 10179 / CIP 106290 / LMG 19151 / DSS12).